Here is a 389-residue protein sequence, read N- to C-terminus: MKRLLSTLLIGIMLLTFAPSAFAKQDGKRTSELAHEAKSAVLIERDTGKVLYNKNSNERLAPASMTKIMTMLLIMEALDKGKIKMSDKVRTSEHAASMGGSQIFLEPGEEMTVKEMLKGIAIASGNDASVAMAEFISGSEEEFVKKMNKKAKELGLKNTSFKNPTGLTEEGHYSSAYDMAIMAKELLKYESITKFTGTYEDYLRENTDKKFWLVNTNRLIKFYPGVDGVKTGYTGEAKYCLTASAKKGNMRAIAVVFGASTPKERNAQVTKMLDFAFSQYETHPLYKRNQTVAKVKVKKGKQKFIELTTSEPISILTKKGEDMNDVKKEIKMKDNISAPIQKGQELGTLVLKKDGEVLAESPVAAKEDMKKAGFITFLKRTMGDWTKFK.

The N-terminal stretch at 1 to 23 is a signal peptide; the sequence is MKRLLSTLLIGIMLLTFAPSAFA. Serine 64 functions as the Acyl-ester intermediate in the catalytic mechanism. Catalysis depends on lysine 67, which acts as the Proton acceptor. Serine 124 is a catalytic residue. Position 230 (lysine 230) interacts with substrate.

This sequence belongs to the peptidase S11 family.

The protein localises to the secreted. The catalysed reaction is Preferential cleavage: (Ac)2-L-Lys-D-Ala-|-D-Ala. Also transpeptidation of peptidyl-alanyl moieties that are N-acyl substituents of D-alanine.. It participates in cell wall biogenesis; peptidoglycan biosynthesis. In terms of biological role, removes C-terminal D-alanyl residues from sugar-peptide cell wall precursors. The chain is D-alanyl-D-alanine carboxypeptidase DacF (dacF) from Bacillus subtilis (strain 168).